The sequence spans 113 residues: Large ribosomal subunit protein uL22 (113 aa).

This sequence belongs to the universal ribosomal protein uL22 family. In terms of assembly, part of the 50S ribosomal subunit.

In terms of biological role, this protein binds specifically to 23S rRNA; its binding is stimulated by other ribosomal proteins, e.g. L4, L17, and L20. It is important during the early stages of 50S assembly. It makes multiple contacts with different domains of the 23S rRNA in the assembled 50S subunit and ribosome. Its function is as follows. The globular domain of the protein is located near the polypeptide exit tunnel on the outside of the subunit, while an extended beta-hairpin is found that lines the wall of the exit tunnel in the center of the 70S ribosome. This is Large ribosomal subunit protein uL22 from Geobacillus sp. (strain WCH70).